Consider the following 234-residue polypeptide: MKILSCLLLCTITVLEGNVMNRHNKRFAGFNVAGIGGTAGCVVVDNKLFANGFFLRELTAEEQREFAQYVEESNKYKEELKVSLEERRKGWQIARQSEKGAKILSTITEKNLPKPPKKPSFCTAADTTQYYFDGCMVQNNKIFVGQSYVRDLTADEAKELKSFDVKMTAYQKYLSSSIQQQMNSLFGDKTNLLNLFTNTHLESTSQASEATTIPTTTQTPVEAPETPSFCVPIY.

The first 17 residues, 1–17, serve as a signal peptide directing secretion; it reads MKILSCLLLCTITVLEG. A disulfide bridge connects residues Cys-135 and Cys-230. The tract at residues 204–234 is disordered; sequence TSQASEATTIPTTTQTPVEAPETPSFCVPIY. A compositionally biased stretch (low complexity) spans 211-220; the sequence is TTIPTTTQTP.

It belongs to the protease inhibitor I33 family.

The protein resides in the secreted. In terms of biological role, aspartyl protease inhibitor. The chain is Filarial antigen Av33 from Acanthocheilonema viteae (Filarial nematode worm).